Reading from the N-terminus, the 544-residue chain is Rubrofusarin-specific efflux pump aurT (544 aa).

Residues 1-12 are compositionally biased toward basic and acidic residues; it reads MTDNTDMEKLDR. Residues 1–42 are disordered; it reads MTDNTDMEKLDRATTPTPIPNEAPPTSEPSESKPEEAEDESK. Positions 17-27 are enriched in pro residues; the sequence is TPIPNEAPPTS. Over residues 30-42 the composition is skewed to basic and acidic residues; it reads SESKPEEAEDESK. 8 consecutive transmembrane segments (helical) span residues 45–65, 89–111, 116–136, 146–166, 177–197, 205–225, 246–266, and 276–296; these read HGLKLAAIILSNMVAMFLVAL, WYASAYLITSSATQLLWGRIFTF, TVYLVAIFFFELGSLLCGVAP, AIAGAGSAGIYSGSTILITTV, GMMGAVFGIASVIAPLIGGAF, WCFYINLPVGGAAVACLILLF, WGNLVFLPGVICLILALQWGG, and IVALLVLACVLLLVFIGIQIW. An N-linked (GlcNAc...) asparagine glycan is attached at asparagine 300. A run of 6 helical transmembrane segments spans residues 318–338, 357–377, 380–400, 407–427, 444–464, and 514–534; these read IFAFCLGSVLIVFLIALPIWF, VLSLVFGAIVSGGVINGVGWF, VFFSSVIFMSVGGGLITTFVV, WIGYQIILGLGIGQGMQLASL, LMFFAQSLGGSVLVCVAQAVF, and YFYVGLAAACFAVLPSLGIEW.

Belongs to the major facilitator superfamily. TCR/Tet family.

It is found in the cell membrane. Its pathway is pigment biosynthesis. Rubrofusarin-specific efflux pump; part of the gene cluster that mediates the biosynthesis of aurofusarin, a red mycelium pigment which is acting as a mycotoxin. The first step is performed by the polyketide synthase which condenses one acetyl-CoA and 6 malonyl-CoA units to form the first intermediate, the cyclic heptaketide and yellow pigment YWA1. The C2 hydroxyl group in the pyrone ring of YWA1 is probably formed during ring closure by an aldol-type cyclization reaction. The dehydratase aurZ then acts as the first tailoring enzyme in the aurofusarin biosynthetic pathway by converting YWA1 to nor-rubrofusarin. Nor-rubrofusarin is then methylated to rubrofusarin by the O-methyltransferase aurJ. Rubrofusarin is then transported across the plasma membrane by the rubrofusarin-specific pump aurT for further enzymatic processing by the extracellular complex composed of GIP1, aurF, aurO and aurS to yield aurofusarin. This is Rubrofusarin-specific efflux pump aurT from Gibberella zeae (strain ATCC MYA-4620 / CBS 123657 / FGSC 9075 / NRRL 31084 / PH-1) (Wheat head blight fungus).